We begin with the raw amino-acid sequence, 123 residues long: Anti-lipopolysaccharide factor (123 aa).

Positions 1-26 (MRTRVMAGLCVALVVMCLYMPQPCEA) are cleaved as a signal peptide. Cys55 and Cys76 are oxidised to a cystine.

As to expression, strong expression in hemocytes, heart and muscle, with weaker expression detected in gills and hepatopancreas. No expression detected in eyes.

The protein localises to the secreted. In terms of biological role, binds to bacterial LPS and may specifically inhibit the LPS-mediated activation of the hemolymph coagulation. It has a strong antibacterial effect especially on the growth of Gram-negative bacteria. This Scylla serrata (Mud crab) protein is Anti-lipopolysaccharide factor.